A 64-amino-acid polypeptide reads, in one-letter code: Makatoxin-1 (64 aa).

Positions arginine 2–arginine 64 constitute an LCN-type CS-alpha/beta domain. 4 disulfide bridges follow: cysteine 12-cysteine 63, cysteine 16-cysteine 36, cysteine 22-cysteine 46, and cysteine 26-cysteine 48.

Expressed by the venom gland.

The protein resides in the secreted. Its function is as follows. This protein markedly relaxes the rat carbachol-precontracted anococcygeus muscle. This relaxation is inhibited by the inhibitor of nitric oxide (NO) synthase, N-nitro-L-arginine methyl ester (L-NAME), suggesting that the response induced by this protein is NO-mediated. The sequence is that of Makatoxin-1 from Olivierus martensii (Manchurian scorpion).